The chain runs to 285 residues: HTH-type transcriptional regulator MurR (285 aa).

An HTH rpiR-type domain is found at 1–77 (MLYLTKISNA…MALIGEYSAS (77 aa)). Residues 37-56 (SRQMAKQLGISQSSIVKFAQ) constitute a DNA-binding region (H-T-H motif). Residues 128–268 (IIDVISKAQF…FVGLVQLNDV (141 aa)) enclose the SIS domain.

In terms of assembly, homotetramer.

It participates in amino-sugar metabolism; N-acetylmuramate degradation [regulation]. Represses the expression of the murPQ operon involved in the uptake and degradation of N-acetylmuramic acid (MurNAc). Binds to two adjacent inverted repeats within the operator region. MurNAc 6-phosphate, the substrate of MurQ, is the specific inducer that weakens binding of MurR to the operator. The sequence is that of HTH-type transcriptional regulator MurR from Escherichia coli (strain B / BL21-DE3).